The sequence spans 381 residues: Endophilin-A homolog (381 aa).

The tract at residues 1-21 (MSLSGLRKQFNKANQYLSETM) is membrane-binding amphipathic helix. Residues 18-247 (SETMGAAEPT…LGHRIKDAAA (230 aa)) enclose the BAR domain. The stretch at 170–238 (CKKRQQRRDD…QCLENLQQQL (69 aa)) forms a coiled coil. A disordered region spans residues 246–323 (AARPREEHVP…PPPLSQQQKP (78 aa)). Residues 260 to 271 (ANESRTPRSSFR) show a composition bias toward polar residues. Over residues 305–317 (YQGPPPGGLPPPL) the composition is skewed to pro residues. The SH3 domain maps to 320-379 (QQKPQCRALFDFDAQSEGELDFKEGTLIELVSQIDENWYEGRVNGKTGLFPVTYVQVLVP).

This sequence belongs to the endophilin family. May form a homodimer (via the BAR domain). As to expression, expressed in neurons and posterior intestine.

It is found in the synapse. The protein localises to the cytoplasmic vesicle. The protein resides in the secretory vesicle. It localises to the synaptic vesicle. Its subcellular location is the membrane. In terms of biological role, involved in synaptic vesicle (SV) recycling in neurons probably by regulating clathrin-mediated endocytosis. By controlling SV endocytosis, regulates the rate of excitatory postsynaptic currents (EPSCs) at neuromuscular junctions and thus locomotion. In a similar manner, involved in necrotic neuronal cell death induced by abnormal hyperactivation of ion channels. Plays a minor role in responses to mechanical stimuli. Plays a minor role in unc-26/synaptojanin localization to synapses. The chain is Endophilin-A homolog from Caenorhabditis elegans.